A 97-amino-acid chain; its full sequence is Putative septation protein SpoVG (97 aa).

It belongs to the SpoVG family.

Essential for sporulation. Interferes with or is a negative regulator of the pathway leading to asymmetric septation. The protein is Putative septation protein SpoVG of Bacillus velezensis (strain DSM 23117 / BGSC 10A6 / LMG 26770 / FZB42) (Bacillus amyloliquefaciens subsp. plantarum).